An 884-amino-acid polypeptide reads, in one-letter code: Translation initiation factor IF-2 (884 aa).

Positions 93 to 288 are disordered; sequence VNTPEAEQAK…KGKRKPSTLQ (196 aa). The segment covering 99–209 has biased composition (basic and acidic residues); sequence EQAKAEEQAQ…KMAAENEGKW (111 aa). Positions 216-229 are enriched in polar residues; sequence QTESADYHVTTSQH. Residues 231 to 246 are compositionally biased toward basic and acidic residues; the sequence is RAAEDENDAKVEGDRR. Residues 247 to 261 are compositionally biased toward basic residues; it reads SRTRGGKATKQKKGN. Positions 262–275 are enriched in basic and acidic residues; the sequence is KLSESKADREEARA. Residues 383-552 enclose the tr-type G domain; that stretch reads HRAPVVTIMG…LLQAEVLELK (170 aa). Residues 392–399 form a G1 region; that stretch reads GHVDHGKT. 392–399 contacts GTP; it reads GHVDHGKT. The segment at 417-421 is G2; it reads GITQH. A G3 region spans residues 438–441; the sequence is DTPG. Residues 438–442 and 492–495 each bind GTP; these read DTPGH and NKID. Residues 492 to 495 are G4; that stretch reads NKID. The segment at 528-530 is G5; that stretch reads SAK.

Belongs to the TRAFAC class translation factor GTPase superfamily. Classic translation factor GTPase family. IF-2 subfamily.

The protein localises to the cytoplasm. Its function is as follows. One of the essential components for the initiation of protein synthesis. Protects formylmethionyl-tRNA from spontaneous hydrolysis and promotes its binding to the 30S ribosomal subunits. Also involved in the hydrolysis of GTP during the formation of the 70S ribosomal complex. The chain is Translation initiation factor IF-2 from Yersinia pestis bv. Antiqua (strain Angola).